A 503-amino-acid polypeptide reads, in one-letter code: Glycerol kinase (503 aa).

T12 is a binding site for ADP. ATP-binding residues include T12, T13, and S14. Position 12 (T12) interacts with sn-glycerol 3-phosphate. An ADP-binding site is contributed by R16. Sn-glycerol 3-phosphate is bound by residues R82, E83, Y134, and D243. Glycerol contacts are provided by R82, E83, Y134, D243, and Q244. T265 and G308 together coordinate ADP. 4 residues coordinate ATP: T265, G308, Q312, and G412. G412 provides a ligand contact to ADP.

The protein belongs to the FGGY kinase family.

It carries out the reaction glycerol + ATP = sn-glycerol 3-phosphate + ADP + H(+). It participates in polyol metabolism; glycerol degradation via glycerol kinase pathway; sn-glycerol 3-phosphate from glycerol: step 1/1. Inhibited by fructose 1,6-bisphosphate (FBP). Functionally, key enzyme in the regulation of glycerol uptake and metabolism. Catalyzes the phosphorylation of glycerol to yield sn-glycerol 3-phosphate. The chain is Glycerol kinase from Nitrobacter hamburgensis (strain DSM 10229 / NCIMB 13809 / X14).